A 409-amino-acid polypeptide reads, in one-letter code: Endoglucanase B (409 aa).

Substrate contacts are provided by residues His61, 65 to 66 (WY), Tyr92, and His127. The active-site Proton donor is the Glu165. Tyr228 is a binding site for substrate. Glu254 functions as the Nucleophile in the catalytic mechanism. Substrate is bound by residues 260 to 261 (AT), Trp288, and 293 to 295 (KDE). The interval 326–372 (IRESATTPPSDPTPPSDPDPGEPEPDPGEPDPTPPSDPGDYPAWDPN) is disordered. Residues 334–343 (PSDPTPPSDP) show a composition bias toward pro residues. The span at 344 to 354 (DPGEPEPDPGE) shows a compositional bias: acidic residues.

Belongs to the glycosyl hydrolase 5 (cellulase A) family.

The enzyme catalyses Endohydrolysis of (1-&gt;4)-beta-D-glucosidic linkages in cellulose, lichenin and cereal beta-D-glucans.. The protein is Endoglucanase B (celB) of Evansella cellulosilytica (strain ATCC 21833 / DSM 2522 / FERM P-1141 / JCM 9156 / N-4) (Bacillus cellulosilyticus).